Here is a 428-residue protein sequence, read N- to C-terminus: GTPase Obg (428 aa).

The Obg domain maps to 1–158; it reads MFIDTAKIFV…RWVALELKLL (158 aa). The region spanning 159–331 is the OBG-type G domain; it reads ADVGLLGFPN…VIKEAARMLK (173 aa). Residues 165–172, 190–194, 212–215, 282–285, and 312–314 each bind GTP; these read GFPNVGKS, FTTLK, DVPG, NKCD, and SAA. Residues Ser-172 and Thr-192 each contribute to the Mg(2+) site. The OCT domain occupies 345–428; it reads RFIPEDKKFT…LNDFEFEYLL (84 aa).

The protein belongs to the TRAFAC class OBG-HflX-like GTPase superfamily. OBG GTPase family. As to quaternary structure, monomer. Mg(2+) serves as cofactor.

Its subcellular location is the cytoplasm. Functionally, an essential GTPase which binds GTP, GDP and possibly (p)ppGpp with moderate affinity, with high nucleotide exchange rates and a fairly low GTP hydrolysis rate. Plays a role in control of the cell cycle, stress response, ribosome biogenesis and in those bacteria that undergo differentiation, in morphogenesis control. The polypeptide is GTPase Obg (Clostridium perfringens (strain ATCC 13124 / DSM 756 / JCM 1290 / NCIMB 6125 / NCTC 8237 / Type A)).